Consider the following 125-residue polypeptide: Snaclec alboaggregin-A subunit beta (125 aa).

The C-type lectin domain occupies Gly-1–Gly-125. 3 disulfides stabilise this stretch: Cys-4–Cys-15, Cys-32–Cys-121, and Cys-98–Cys-113.

The protein belongs to the snaclec family. As to quaternary structure, heterotetramer of the subunits alpha, alpha', beta and beta'; disulfide-linked. Expressed by the venom gland.

Its subcellular location is the secreted. Its function is as follows. Potent platelet activator that aggregates platelets via both GPIbalpha (GP1BA) and GPVI (GP6). Induces a tyrosine phosphorylation profile in platelets that resembles this produced by collagen, involving the time dependent tyrosine phosphorylation of Fc receptor gamma chain (FCGR1A), phospholipase Cgamma2 (PLCG2), and LAT. This chain is Snaclec alboaggregin-A subunit beta, found in Trimeresurus albolabris (White-lipped pit viper).